We begin with the raw amino-acid sequence, 504 residues long: Potassium voltage-gated channel subfamily V member 1 (504 aa).

2 disordered regions span residues 1–22 (MDLSPRNRPLLESSSLDSGGSL) and 172–193 (KKDTDDQESQHESEQDFSQGPC). At 1-214 (MDLSPRNRPL…EKPGSSTAAR (214 aa)) the chain is on the cytoplasmic side. The segment covering 10–22 (LLESSSLDSGGSL) has biased composition (low complexity). Over residues 172 to 185 (KKDTDDQESQHESE) the composition is skewed to basic and acidic residues. Residues 215–235 (IFGVISIIFVAVSIVNMALMS) form a helical membrane-spanning segment. Topologically, residues 236–242 (AELSWLN) are extracellular. Residues 243-263 (LQLLEILEYVCISWFTGEFIL) form a helical membrane-spanning segment. The Cytoplasmic portion of the chain corresponds to 264 to 280 (RFLCVKDRCRFLRKVPN). Residues 281 to 301 (IIDLLAILPFYITLLVESLSG) traverse the membrane as a helical segment. Residues 302-313 (SHTTQELENVGR) lie on the Extracellular side of the membrane. The helical; Voltage-sensor transmembrane segment at 314–335 (LVQVLRLLRALRMLKLGRHSTG) threads the bilayer. The Cytoplasmic segment spans residues 336–349 (LRSLGMTITQCYEE). Residues 350–370 (VGLLLLFLSVGISIFSTIEYF) form a helical membrane-spanning segment. Positions 396 to 401 (TVGYGD) match the Selectivity filter motif. A helical membrane pass occupies residues 411-431 (IVAFMCILSGILVLALPIAII). The Cytoplasmic segment spans residues 432-504 (NDRFSACYFT…RSSGGDDFWF (73 aa)).

Belongs to the potassium channel family. V (TC 1.A.1.2) subfamily. Kv8.1/KCNV1 sub-subfamily. As to quaternary structure, heteromultimer with KCNB1 and KCNB2. Interacts with KCNC4 and KCND1. As to expression, detected in brain, throughout layers II, IV and VI of the brain cortex. Detected in cerebellum and hippocampus, in the granule cell layer, Purkinje cell layer, pyramidal cell layer and dentate gyrus. Detected at lower levels in olfactory bulb, amygdala, thalamus, hypothalamus, midbrain and brainstem.

Its subcellular location is the cell membrane. In terms of biological role, potassium channel subunit that does not form functional channels by itself. Modulates KCNB1 and KCNB2 channel activity by shifting the threshold for inactivation to more negative values and by slowing the rate of inactivation. Can down-regulate the channel activity of KCNB1, KCNB2, KCNC4 and KCND1, possibly by trapping them in intracellular membranes. The polypeptide is Potassium voltage-gated channel subfamily V member 1 (KCNV1) (Mesocricetus auratus (Golden hamster)).